Consider the following 506-residue polypeptide: Serine/threonine-protein kinase RIO1 (506 aa).

A disordered region spans residues T22–D52. In terms of domain architecture, Protein kinase spans L142–K506. Residues I148–V156, K169, and L241 each bind ATP. D285 acts as the Proton acceptor in catalysis. N290 serves as a coordination point for ATP. N290 and D302 together coordinate Mg(2+). The 4-aspartylphosphate intermediate role is filled by D302. The interval G418–K506 is disordered. Over residues E424 to E435 the composition is skewed to acidic residues. The span at E454–E490 shows a compositional bias: basic and acidic residues. Positions K491 to K506 are enriched in basic residues.

Belongs to the protein kinase superfamily. RIO-type Ser/Thr kinase family. It depends on Mg(2+) as a cofactor. In terms of tissue distribution, expressed in vulva and uterine cells, uterine seam cells (utse), spermatheca and in the nervous system including chemosensory neurons in the head, nerve ring neurons (RID/RIF), inhibitory motor neurons (DA/DD/VA/VD), mechanosensory neurons (ALML/PLML) and tail sensory neurons (DVA//PDA). Also expressed in intestine and pharynx (procorpus) and rectal valve and gland.

The protein resides in the cytoplasm. The enzyme catalyses L-seryl-[protein] + ATP = O-phospho-L-seryl-[protein] + ADP + H(+). The catalysed reaction is L-threonyl-[protein] + ATP = O-phospho-L-threonyl-[protein] + ADP + H(+). Involved in the final steps of cytoplasmic maturation of the 40S ribosomal subunit. Despite the protein kinase domain is proposed to act predominantly as an ATPase. The catalytic activity regulates its dynamic association with the 40S subunit. Plays a role in oogenesis by regulating germ cell proliferation, progression through diplotene and diakinesis stages and oocyte maturation. Regulates germline development probably by regulating the phosphorylation of mpk-1. Involved in larval development. This is Serine/threonine-protein kinase RIO1 from Caenorhabditis elegans.